Here is a 203-residue protein sequence, read N- to C-terminus: Leucyl/phenylalanyl-tRNA--protein transferase (203 aa).

It belongs to the L/F-transferase family.

It localises to the cytoplasm. The enzyme catalyses N-terminal L-lysyl-[protein] + L-leucyl-tRNA(Leu) = N-terminal L-leucyl-L-lysyl-[protein] + tRNA(Leu) + H(+). The catalysed reaction is N-terminal L-arginyl-[protein] + L-leucyl-tRNA(Leu) = N-terminal L-leucyl-L-arginyl-[protein] + tRNA(Leu) + H(+). It catalyses the reaction L-phenylalanyl-tRNA(Phe) + an N-terminal L-alpha-aminoacyl-[protein] = an N-terminal L-phenylalanyl-L-alpha-aminoacyl-[protein] + tRNA(Phe). Functions in the N-end rule pathway of protein degradation where it conjugates Leu, Phe and, less efficiently, Met from aminoacyl-tRNAs to the N-termini of proteins containing an N-terminal arginine or lysine. This Chelativorans sp. (strain BNC1) protein is Leucyl/phenylalanyl-tRNA--protein transferase.